We begin with the raw amino-acid sequence, 101 residues long: Large ribosomal subunit protein uL24 (101 aa).

The protein belongs to the universal ribosomal protein uL24 family. In terms of assembly, part of the 50S ribosomal subunit.

Functionally, one of two assembly initiator proteins, it binds directly to the 5'-end of the 23S rRNA, where it nucleates assembly of the 50S subunit. One of the proteins that surrounds the polypeptide exit tunnel on the outside of the subunit. This Borrelia recurrentis (strain A1) protein is Large ribosomal subunit protein uL24.